The sequence spans 188 residues: Ribosome-recycling factor (188 aa).

It belongs to the RRF family.

Its subcellular location is the cytoplasm. Responsible for the release of ribosomes from messenger RNA at the termination of protein biosynthesis. May increase the efficiency of translation by recycling ribosomes from one round of translation to another. This is Ribosome-recycling factor from Phenylobacterium zucineum (strain HLK1).